The chain runs to 601 residues: Membrane protein insertase YidC (601 aa).

A helical transmembrane segment spans residues 10–30; that stretch reads ISISLVILVLFQVIASYVLPP. The interval 34 to 63 is disordered; the sequence is APPHPATQTAQTQPVSGQPAPGVPAPSAVP. Low complexity predominate over residues 39–53; that stretch reads ATQTAQTQPVSGQPA. The segment covering 54 to 63 has biased composition (pro residues); sequence PGVPAPSAVP. Helical transmembrane passes span 382-404, 455-475, 510-530, and 549-569; these read FGNMGVAIIVFTIGLKLVLFPLV, LPMLPQIPIFFSLYKVIFISI, ALSPFLHLGILPIIMGITMWG, and FMPVIFTFMLGRFAAGLVLYY.

The protein belongs to the OXA1/ALB3/YidC family. Type 1 subfamily. As to quaternary structure, interacts with the Sec translocase complex via SecD. Specifically interacts with transmembrane segments of nascent integral membrane proteins during membrane integration.

The protein resides in the cell inner membrane. In terms of biological role, required for the insertion and/or proper folding and/or complex formation of integral membrane proteins into the membrane. Involved in integration of membrane proteins that insert both dependently and independently of the Sec translocase complex, as well as at least some lipoproteins. Aids folding of multispanning membrane proteins. This chain is Membrane protein insertase YidC, found in Acidiphilium cryptum (strain JF-5).